Consider the following 82-residue polypeptide: Cytochrome c oxidase-assembly factor cox-23, mitochondrial (82 aa).

Residues 1-27 (MAQAGSENKEPWNEETRAKFEGKSRSE) are disordered. Positions 7–27 (ENKEPWNEETRAKFEGKSRSE) are enriched in basic and acidic residues. The CHCH domain maps to 29–71 (LDPCQEAAQRSIRCLHRNQGDRTMCSDYFEAYRECKKQWIERR). 2 consecutive short sequence motifs (cx9C motif) follow at residues 32-42 (CQEAAQRSIRC) and 53-63 (CSDYFEAYREC). Cystine bridges form between Cys-32/Cys-63 and Cys-42/Cys-53.

The protein belongs to the COX23 family.

The protein resides in the mitochondrion intermembrane space. Required for the assembly of cytochrome c oxidase. In Neurospora crassa (strain ATCC 24698 / 74-OR23-1A / CBS 708.71 / DSM 1257 / FGSC 987), this protein is Cytochrome c oxidase-assembly factor cox-23, mitochondrial (cox-23).